The following is a 428-amino-acid chain: MYPKKTHWTAEITPNLHGTEVVVAGWVWELRDIGRVKFVVVRDREGFVQVTLKAGKTPDHLFKVFAELSREDVVVIKGIVEASKIAKSGVEIFPSEIWILNKAKPLPIDIWSETPDLATRLKWRSVDLKRPRNLVVFTVASAMLRSIREVLYGEGFVEVFTPKIIVTSTEGGAELFPVMYFERVAYLSQSPQLYKEQLTASLERVFEIGPAYRAEKHNTDYHLNEFISVDAEAAFMDYNDIMDILEKIMRRLASTVSEYAPKLEEVGIKALMELSNIPRVDYDEAVDRLRQLGYAVNWGDDFTVEMQKALMKYYGPVYFIVNFPASLRPFYTKRKDGEKSESYDLIINGIEVASGATRIHKRDELEEEMKKRGLDPRLFESHLSVFDYGMPPHAGFGLGFNRLVTALLGLDNVRHATLYPRDRYRVEP.

Glutamate 170 contacts L-aspartate. The interval 192–195 is aspartate; that stretch reads QLYK. Arginine 213 is an L-aspartate binding site. ATP is bound by residues 213–215 and glutamate 351; that span reads RAE. Glutamate 351 and serine 354 together coordinate Mg(2+). L-aspartate-binding residues include serine 354 and arginine 358. An ATP-binding site is contributed by 399 to 402; sequence GFNR.

Belongs to the class-II aminoacyl-tRNA synthetase family. Type 2 subfamily. In terms of assembly, homodimer. Requires Mg(2+) as cofactor.

It is found in the cytoplasm. It catalyses the reaction tRNA(Asp) + L-aspartate + ATP = L-aspartyl-tRNA(Asp) + AMP + diphosphate. Its function is as follows. Catalyzes the attachment of L-aspartate to tRNA(Asp) in a two-step reaction: L-aspartate is first activated by ATP to form Asp-AMP and then transferred to the acceptor end of tRNA(Asp). The sequence is that of Aspartate--tRNA(Asp) ligase from Pyrobaculum aerophilum (strain ATCC 51768 / DSM 7523 / JCM 9630 / CIP 104966 / NBRC 100827 / IM2).